The following is a 336-amino-acid chain: MGNCLHPAELSPSTQNSSQLNSEDLWNFSYDGNDSFPDVDYDANLEAAAPCHSCNLLDDSALPFFILVSVLGILASGIVLFMFFRPLFHWQLCPGWPVLAQLAVGSALFSIVVPILAPGLGNTRSSALCSLGYCVWYGSAFAQALLLGCHASLGPKLGADQVPGLTLGLSVGLWGVAALLTLPVTLASGASGGLCTPVYSMELKALQATHAVACLAIFVLLPLGLFGAKGLKKALGMGPGPWMNILWAWFIFWWPHGVVLGLDFLVRSKLLLLSTCLAQQALDLLLNLAEALAILHCVATPLLLALFCHQATRTLLPSLPLPEGWSSHLDTLGSKS.

Topologically, residues 1 to 63 (MGNCLHPAEL…CNLLDDSALP (63 aa)) are extracellular. N-linked (GlcNAc...) asparagine glycosylation is found at Asn16, Asn27, and Asn33. Disulfide bonds link Cys51/Cys276 and Cys129/Cys195. The chain crosses the membrane as a helical span at residues 64 to 84 (FFILVSVLGILASGIVLFMFF). Over 85 to 95 (RPLFHWQLCPG) the chain is Cytoplasmic. The chain crosses the membrane as a helical span at residues 96 to 116 (WPVLAQLAVGSALFSIVVPIL). The Extracellular segment spans residues 117–129 (APGLGNTRSSALC). Residues 130–153 (SLGYCVWYGSAFAQALLLGCHASL) traverse the membrane as a helical segment. At 154–166 (GPKLGADQVPGLT) the chain is on the cytoplasmic side. A helical membrane pass occupies residues 167 to 187 (LGLSVGLWGVAALLTLPVTLA). At 188–207 (SGASGGLCTPVYSMELKALQ) the chain is on the extracellular side. Residues 208 to 228 (ATHAVACLAIFVLLPLGLFGA) form a helical membrane-spanning segment. Topologically, residues 229–244 (KGLKKALGMGPGPWMN) are cytoplasmic. Residues 245-265 (ILWAWFIFWWPHGVVLGLDFL) form a helical membrane-spanning segment. Topologically, residues 266–287 (VRSKLLLLSTCLAQQALDLLLN) are extracellular. The chain crosses the membrane as a helical span at residues 288 to 308 (LAEALAILHCVATPLLLALFC). Over 309 to 336 (HQATRTLLPSLPLPEGWSSHLDTLGSKS) the chain is Cytoplasmic.

It belongs to the G-protein coupled receptor 1 family. Atypical chemokine receptor subfamily.

It localises to the early endosome. The protein resides in the recycling endosome. It is found in the membrane. Atypical chemokine receptor that controls chemokine levels and localization via high-affinity chemokine binding that is uncoupled from classic ligand-driven signal transduction cascades, resulting instead in chemokine sequestration, degradation, or transcytosis. Also known as interceptor (internalizing receptor) or chemokine-scavenging receptor or chemokine decoy receptor. Has a promiscuous chemokine-binding profile, interacting with inflammatory chemokines of both the CXC and the CC subfamilies but not with homeostatic chemokines. Acts as a receptor for chemokines including CCL2, CCL5, CCL7, CCL11, CCL13, CCL14, CCL17, CXCL5, CXCL6, IL8/CXCL8, CXCL11, GRO, RANTES, MCP-1 and TARC. May regulate chemokine bioavailability and, consequently, leukocyte recruitment through two distinct mechanisms: when expressed in endothelial cells, it sustains the abluminal to luminal transcytosis of tissue-derived chemokines and their subsequent presentation to circulating leukocytes; when expressed in erythrocytes, serves as blood reservoir of cognate chemokines but also as a chemokine sink, buffering potential surges in plasma chemokine levels. This is Atypical chemokine receptor 1 (ACKR1) from Papio hamadryas (Hamadryas baboon).